The following is a 325-amino-acid chain: Aminotransferase tasG (325 aa).

A substrate-binding site is contributed by G35. Pyridoxal 5'-phosphate-binding positions include 89-90 (TW), N143, Y174, and 203-205 (SFA). Residue N143 participates in substrate binding. K206 carries the post-translational modification N6-(pyridoxal phosphate)lysine. R214 provides a ligand contact to pyridoxal 5'-phosphate.

Belongs to the class-I pyridoxal-phosphate-dependent aminotransferase family. As to quaternary structure, homodimer. Pyridoxal 5'-phosphate serves as cofactor.

Its pathway is secondary metabolite biosynthesis. Its function is as follows. Aminotransferase; part of the gene cluster that mediates the biosynthesis of the tetramic acids Sch210971 and Sch210972, potential anti-HIV fungal natural product that contain a decalin core. The PKS module of tasS together with the enoylreductase tasC catalyze the formation of the polyketide unit which is then conjugated to 4-hydroxyl-4-methyl glutamate (HMG) by the condensation domain of the tasS NRPS module. One unique structural feature of Sch210971 and Sch210972 is the tetramic acid motif proposed to be derived from the non-proteinogenic amino acid HMG, by a Dieckmann-type condensation catalyzed by the reductase domain of tasS. The aldolase tasA catalyzes the aldol condensation of 2 molecules of pyruvic acid to yield the intermediate 4-hydroxyl-4-methyl-2-oxoglutarate (HMOG), which can then be stereoselectively transaminated, may be by tasG, to form HMG. The Diels-Alderase tas3 then uses the Dieckmann product of tasS as substrate and catalyzes the Diels-Alder cycloaddition to form the decalin ring of Sch210971 and Sch210972. The chain is Aminotransferase tasG from Hapsidospora irregularis.